Consider the following 278-residue polypeptide: Small ribosomal subunit protein uS2 (278 aa).

The disordered stretch occupies residues 235-278; the sequence is AEAAEEAPKRERKAKAAVKKERTKKEDDDALNANVAGKFAKDEE. The segment covering 252 to 261 has biased composition (basic and acidic residues); it reads VKKERTKKED.

Belongs to the universal ribosomal protein uS2 family.

In Parabacteroides distasonis (strain ATCC 8503 / DSM 20701 / CIP 104284 / JCM 5825 / NCTC 11152), this protein is Small ribosomal subunit protein uS2.